Here is a 669-residue protein sequence, read N- to C-terminus: uncharacterized protein (669 aa).

6 helical membrane passes run 39–61 (LCPLLVALAILFSLTAVSSGTSW), 124–146 (ISLWGISLGPTAGTLLVGVLISI), 153–175 (GIIYGIPSIVSTIFLLMFMYALG), 190–212 (GLAFIVIGLIVWSLNWLICFFGV), 221–243 (FAPGIISGSYTITAIIGVAQTAL), and 263–285 (IAAGYAISYVLSNIGIILLIRYL). RCK C-terminal domains lie at 316–397 (AGSL…KLIG) and 398–483 (KESD…LGGR). The next 5 membrane-spanning stretches (helical) occupy residues 484–506 (PILNSSITEVMYMAIAMGIGYIF), 516–538 (IPFALGTSAGCLLAGIFMSYWRS), 558–580 (IGLNLFVAVLAAAVGPKIIESFH), 585–607 (IWVAIIGILGALVPPLVAFVVGI), and 645–667 (VPYPLTYALTTVLALVGGYFAML).

The protein belongs to the AAE transporter (TC 2.A.81) family.

It localises to the cell membrane. This is an uncharacterized protein from Desulfotalea psychrophila (strain LSv54 / DSM 12343).